Reading from the N-terminus, the 316-residue chain is Methionyl-tRNA formyltransferase (316 aa).

110–113 contributes to the (6S)-5,6,7,8-tetrahydrofolate binding site; sequence SLLP.

Belongs to the Fmt family.

It catalyses the reaction L-methionyl-tRNA(fMet) + (6R)-10-formyltetrahydrofolate = N-formyl-L-methionyl-tRNA(fMet) + (6S)-5,6,7,8-tetrahydrofolate + H(+). In terms of biological role, attaches a formyl group to the free amino group of methionyl-tRNA(fMet). The formyl group appears to play a dual role in the initiator identity of N-formylmethionyl-tRNA by promoting its recognition by IF2 and preventing the misappropriation of this tRNA by the elongation apparatus. This chain is Methionyl-tRNA formyltransferase, found in Halothermothrix orenii (strain H 168 / OCM 544 / DSM 9562).